Consider the following 328-residue polypeptide: Malate dehydrogenase (328 aa).

12 to 18 (GAAGQIG) serves as a coordination point for NAD(+). Arg95 and Arg101 together coordinate substrate. Residues Asn108, Gln115, and 132 to 134 (VGN) contribute to the NAD(+) site. Substrate-binding residues include Asn134 and Arg165. Residue His190 is the Proton acceptor of the active site.

This sequence belongs to the LDH/MDH superfamily. MDH type 2 family.

It catalyses the reaction (S)-malate + NAD(+) = oxaloacetate + NADH + H(+). Catalyzes the reversible oxidation of malate to oxaloacetate. This chain is Malate dehydrogenase, found in Delftia acidovorans (strain DSM 14801 / SPH-1).